We begin with the raw amino-acid sequence, 81 residues long: Protein Vpu (81 aa).

Residues 1-7 (MSNLLAI) lie on the Extracellular side of the membrane. The chain crosses the membrane as a helical span at residues 8–28 (GIAALIVALIITIVVWTIAYI). Residues 29–81 (EYKKLVRQRKINRLYKRISERAEDSGNESEGDAEELAALGEVGPFIPGDINNL) lie on the Cytoplasmic side of the membrane. Phosphoserine; by host CK2 occurs at positions 53 and 57.

This sequence belongs to the HIV-1 VPU protein family. In terms of assembly, homopentamer. Interacts with host CD4 and BRTC; these interactions induce proteasomal degradation of CD4. Interacts with host BST2; this interaction leads to the degradation of host BST2. Interacts with host FBXW11. Interacts with host AP1M1; this interaction plays a role in the mistrafficking and subsequent degradation of host BST2. Interacts with host RANBP2; this interaction allows Vpu to down-regulate host BLM sumoylation. Post-translationally, phosphorylated by host CK2. This phosphorylation is necessary for interaction with human BTRC and degradation of CD4.

It is found in the host membrane. With respect to regulation, ion channel activity is inhibited by hexamethylene amiloride in vitro. Its function is as follows. Enhances virion budding by targeting host CD4 and Tetherin/BST2 to proteasome degradation. Degradation of CD4 prevents any unwanted premature interactions between viral Env and its host receptor CD4 in the endoplasmic reticulum. Degradation of antiretroviral protein Tetherin/BST2 is important for virion budding, as BST2 tethers new viral particles to the host cell membrane. Mechanistically, Vpu bridges either CD4 or BST2 to BTRC, a substrate recognition subunit of the Skp1/Cullin/F-box protein E3 ubiquitin ligase, induces their ubiquitination and subsequent proteasomal degradation. The alteration of the E3 ligase specificity by Vpu seems to promote the degradation of host IKBKB, leading to NF-kappa-B down-regulation and subsequent apoptosis. Acts as a viroporin that forms an oligomeric ion channel in membranes. Modulates the host DNA repair mechanisms to promote degradation of nuclear viral cDNA in cells that are already productively infected in order to suppress immune sensing and proviral hyper-integration (superinfection). Manipulates PML-NBs and modulates SUMOylation of host BLM protein thereby enhancing its DNA-end processing activity toward viral unintegrated linear DNA. Also inhibits RAD52-mediated homologous repair of viral cDNA, preventing the generation of dead-end circular forms of single copies of the long terminal repeat and permitting sustained nucleolytic attack. The polypeptide is Protein Vpu (Homo sapiens (Human)).